An 812-amino-acid polypeptide reads, in one-letter code: Probable inorganic carbon transporter subunit DabA (812 aa).

Residues C339, D341, H501, and C516 each contribute to the Zn(2+) site.

The protein belongs to the inorganic carbon transporter (TC 9.A.2) DabA family. In terms of assembly, forms a complex with DabB. The cofactor is Zn(2+).

The protein localises to the cell inner membrane. Its function is as follows. Part of an energy-coupled inorganic carbon pump. This is Probable inorganic carbon transporter subunit DabA from Xanthomonas axonopodis pv. citri (strain 306).